The primary structure comprises 762 residues: 5-methyltetrahydropteroyltriglutamate--homocysteine methyltransferase (762 aa).

5-methyltetrahydropteroyltri-L-glutamate contacts are provided by residues Arg17 to Lys20 and Lys111. L-homocysteine is bound by residues Ile435–Ser437 and Glu488. L-methionine-binding positions include Ile435 to Ser437 and Glu488. 5-methyltetrahydropteroyltri-L-glutamate contacts are provided by residues Arg519–Cys520 and Trp565. Asp603 is a binding site for L-homocysteine. Asp603 serves as a coordination point for L-methionine. Residue Glu609 participates in 5-methyltetrahydropteroyltri-L-glutamate binding. 3 residues coordinate Zn(2+): His645, Cys647, and Glu669. His698 (proton donor) is an active-site residue. Cys730 contacts Zn(2+).

Belongs to the vitamin-B12 independent methionine synthase family. Zn(2+) is required as a cofactor.

The catalysed reaction is 5-methyltetrahydropteroyltri-L-glutamate + L-homocysteine = tetrahydropteroyltri-L-glutamate + L-methionine. It functions in the pathway amino-acid biosynthesis; L-methionine biosynthesis via de novo pathway; L-methionine from L-homocysteine (MetE route): step 1/1. Its function is as follows. Catalyzes the transfer of a methyl group from 5-methyltetrahydrofolate to homocysteine resulting in methionine formation. The polypeptide is 5-methyltetrahydropteroyltriglutamate--homocysteine methyltransferase (Bacillus anthracis (strain A0248)).